The sequence spans 924 residues: Exocyst complex component 2 (924 aa).

The IPT/TIG domain maps to 8–93; sequence PLVTGISPNE…GTSTVSFKLL (86 aa). Positions 240 to 260 form a coiled coil; sequence QKLENVLNRASNTADTLFQEV. S431, S432, and S435 each carry phosphoserine. Residue T440 is modified to Phosphothreonine. K454 is subject to N6-acetyllysine.

It belongs to the SEC5 family. In terms of assembly, the exocyst complex is composed of EXOC1, EXOC2, EXOC3, EXOC4, EXOC5, EXOC6, EXOC7 and EXOC8. Interacts with EXOC3L1. Interacts with GNEFR/DELGEF; this interaction occurs only in the presence of magnesium or manganese and is stimulated by dCTP or GTP. Interacts with RALA and RALB. Interacts with ARL13B; regulates ARL13B localization to the cilium membrane.

It is found in the midbody. Its subcellular location is the midbody ring. Its function is as follows. Component of the exocyst complex involved in the docking of exocytic vesicles with fusion sites on the plasma membrane. In Mus musculus (Mouse), this protein is Exocyst complex component 2 (Exoc2).